The sequence spans 1356 residues: Fibronectin type III domain containing protein 3C1 (1356 aa).

3 disordered regions span residues 303-341 (PRNM…SDNN), 356-402 (TYDE…SDVA), and 428-452 (NQKK…QPGC). The span at 308 to 341 (DNIPDTNTTDTITSSSAHTPSISTSNATFCSDNN) shows a compositional bias: low complexity. The span at 370–393 (PSCTSQSASNPSVSENAHNPSSIN) shows a compositional bias: polar residues. Residues 439–448 (LKEHNTEDRT) are compositionally biased toward basic and acidic residues. Fibronectin type-III domains lie at 454–549 (NIEK…TPGC), 553–648 (PPLA…TPPA), 650–741 (LPPK…TRPA), and 745–842 (CPNK…TLPP). Over residues 825–838 (GQSRPSDVLTIQTP) the composition is skewed to polar residues. The segment at 825–894 (GQSRPSDVLT…QDRKVHPSSE (70 aa)) is disordered. Residues 883–894 (PHQDRKVHPSSE) are compositionally biased toward basic and acidic residues. 4 consecutive Fibronectin type-III domains span residues 914–1007 (PPSQ…TPGT), 1017–1103 (EVES…TKPL), 1104–1199 (PPEP…TKSP), and 1202–1299 (ALKA…TYKH). A disordered region spans residues 1299–1320 (HHSGHGKGSGSKGKGNHNDKGE). The helical transmembrane segment at 1330–1350 (TFVLTLLIGFALIAVLCAVAV) threads the bilayer. The Cytoplasmic segment spans residues 1351–1356 (QYLLIN).

Belongs to the FNDC3 family.

It is found in the membrane. This is Fibronectin type III domain containing protein 3C1 (Fndc3c1) from Mus musculus (Mouse).